A 160-amino-acid polypeptide reads, in one-letter code: uncharacterized protein (160 aa).

The protein localises to the mitochondrion. This is an uncharacterized protein from Arabidopsis thaliana (Mouse-ear cress).